Here is a 140-residue protein sequence, read N- to C-terminus: MYLAREMDLAILPSRRLVKFKAFTKRSLSMDEIELASLSSRAFLFNFLPLLLLLAFLDIFASSNASFLAAVLIKILVKSVFSALGSSLKSFTSGSRASDCLAALEFFDIFLAMLCFRRYLTSIVKEKTTFCRLCSHIQYF.

The next 3 membrane-spanning stretches (helical) occupy residues 42 to 62 (AFLF…IFAS), 65 to 85 (ASFL…SALG), and 96 to 116 (RASD…MLCF).

Its subcellular location is the membrane. This is an uncharacterized protein from Saccharomyces cerevisiae (strain ATCC 204508 / S288c) (Baker's yeast).